Here is a 488-residue protein sequence, read N- to C-terminus: MGKFLATLILFFQFCPLILGDYSPSCCTLTIGVSSYHSKPCNPAQPVCSWTLDLLALSADQALQPPCPNLVAYSSYHATYSLYLFPHWIKKPNRNGGGYYSASYSDPCSLKCPYLGCQSWTCPYTGAVSSPYWKFQQDVNFTQEVSRLNINLHFSKCGFPFSLLVDAPGYDPIWFLNTEPSQLPPTTPPLLPHSNLDHILEPSIPWKSKLLTLVQLTLQSTNYTCIVCIDRASLSTWHVLYSPNVSVPSSSSTPLLYPSLALPAPHLTLPFNWTHCFDPQIQAIVSSPCHNSLILPPFSLSPVPTLGSRSRRAVPVAVWLVSALAIGAGVAGGITGSMSLASGKSLLHEVDKDISQLTQAIVKNHKNLLKIAQYAAQNRRGLDLLFWEQGGLCKALQEQCCFLNITNSHVSMLQERPPLENRVLTGWGLNWDLGLSQWAREALQTGITLVALLLLVILAGPCILRQLRHLPSRVRYPHYSLINPESSL.

The N-terminal stretch at 1–20 is a signal peptide; the sequence is MGKFLATLILFFQFCPLILG. The Extracellular segment spans residues 21–442; sequence DYSPSCCTLT…LGLSQWAREA (422 aa). N-linked (GlcNAc...) asparagine; by host glycans are attached at residues N140 and N222. The CXXC signature appears at 225-228; the sequence is CIVC. 3 disulfides stabilise this stretch: C225/C228, C225/C401, and C393/C400. N-linked (GlcNAc...) asparagine; by host glycosylation is found at N244 and N272. A fusion peptide region spans residues 313–333; sequence AVPVAVWLVSALAIGAGVAGG. 2 coiled-coil regions span residues 341–387 and 397–429; these read ASGK…LLFW and QEQC…GWGL. Positions 376-392 are immunosuppression; sequence AQNRRGLDLLFWEQGGL. Residues 393–401 carry the CX6CC motif; sequence CKALQEQCC. A glycan (N-linked (GlcNAc...) asparagine; by host) is linked at N404. A helical transmembrane segment spans residues 443 to 463; the sequence is LQTGITLVALLLLVILAGPCI. C462 carries the S-palmitoyl cysteine; by host lipid modification. The Cytoplasmic portion of the chain corresponds to 464–488; sequence LRQLRHLPSRVRYPHYSLINPESSL.

As to quaternary structure, the mature envelope protein (Env) consists of a trimer of SU-TM heterodimers attached by a labile interchain disulfide bond. Post-translationally, specific enzymatic cleavages in vivo yield mature proteins. Envelope glycoproteins are synthesized as an inactive precursor that is N-glycosylated and processed likely by host cell furin or by a furin-like protease in the Golgi to yield the mature SU and TM proteins. The cleavage site between SU and TM requires the minimal sequence [KR]-X-[KR]-R. The CXXC motif is highly conserved across a broad range of retroviral envelope proteins. It is thought to participate in the formation of a labile disulfide bond possibly with the CX6CC motif present in the transmembrane protein. Isomerization of the intersubunit disulfide bond to an SU intrachain disulfide bond is thought to occur upon receptor recognition in order to allow membrane fusion. In terms of processing, the transmembrane protein is palmitoylated.

The protein localises to the virion membrane. The protein resides in the host cell membrane. The surface protein (SU) attaches the virus to the host cell by binding to its receptor. This interaction triggers the refolding of the transmembrane protein (TM) and is thought to activate its fusogenic potential by unmasking its fusion peptide. Fusion occurs at the host cell plasma membrane. Its function is as follows. The transmembrane protein (TM) acts as a class I viral fusion protein. Under the current model, the protein has at least 3 conformational states: pre-fusion native state, pre-hairpin intermediate state, and post-fusion hairpin state. During viral and target cell membrane fusion, the coiled coil regions (heptad repeats) assume a trimer-of-hairpins structure, positioning the fusion peptide in close proximity to the C-terminal region of the ectodomain. The formation of this structure appears to drive apposition and subsequent fusion of viral and target cell membranes. Membranes fusion leads to delivery of the nucleocapsid into the cytoplasm. The sequence is that of Envelope glycoprotein gp62 (env) from Human T-cell leukemia virus 1 (isolate Caribbea CH subtype A) (HTLV-1).